The following is a 614-amino-acid chain: Zinc metalloproteinase-disintegrin-like protein H4 subunit A (614 aa).

Positions 1 to 20 are cleaved as a signal peptide; sequence MIQPLLVVTCLVVFPYQVSS. Residues 21-193 constitute a propeptide that is removed on maturation; sequence IILESGNVND…RKASQLVATS (173 aa). Glu194 is subject to Pyrrolidone carboxylic acid (Glu). The Peptidase M12B domain maps to 201–397; it reads KYIELVIVVD…IKSKCIDNKP (197 aa). Residue Asn220 is glycosylated (N-linked (GlcNAc...) asparagine). Disulfide bonds link Cys312/Cys392, Cys352/Cys376, Cys354/Cys359, Cys408/Cys437, Cys419/Cys432, Cys421/Cys427, Cys431/Cys454, Cys445/Cys451, Cys450/Cys476, Cys463/Cys483, Cys470/Cys502, Cys495/Cys507, Cys514/Cys564, Cys529/Cys575, Cys542/Cys552, Cys559/Cys601, and Cys595/Cys607. Residue His337 participates in Zn(2+) binding. The Metal-binding signature appears at 337–348; it reads HELGHNLGMDHD. Glu338 acts as the Proton acceptor in catalysis. The Zn(2+) site is built by His341 and His347. Residues 405–491 form the Disintegrin domain; the sequence is PAFCGNYFVE…ECPTDVLQRN (87 aa). Residues Asn410, Phe412, Glu414, Glu417, and Asp420 each coordinate Ca(2+). An N-linked (GlcNAc...) asparagine glycan is attached at Asn433. A D/ECD-tripeptide motif is present at residues 469 to 471; it reads ECD. Residues Asp471 and Asp486 each coordinate Ca(2+).

The protein belongs to the venom metalloproteinase (M12B) family. P-III subfamily. In terms of assembly, homodimer; disulfide-linked. Heterodimer of A and B subunits; disulfide-linked. It depends on Zn(2+) as a cofactor. Post-translationally, N-glycosylated. The N-terminus is blocked. As to expression, expressed by the venom gland (at protein level). Expressed by the venom gland.

It localises to the secreted. Its activity is regulated as follows. The proteolytic activity of the heterodimer of A and B subunits requires Zn(2+) and Ca(2+) ions. Heterodimer (A and B subunits): Zinc metalloprotease that has fibrinogenolytic and hemorrhagic activities. Cleaves insulin B chain preferably at '40-Tyr-|-Leu-41' bond, but also at '28-Gln-|-His-29' and '34-His-|-Leu-35' bonds. Hydrolyzes effectively isolated extracellular matrix (ECM) bovine fibronectin, and only slightly, basal membrane (BM) proteins human collagen IV and murine laminin, in vitro. Cleaves nidogen-1 (at '350-Ser-|-Phe-351' and '380-Tyr-|-Asn-381' bonds), but not laminin, in a solubilized BM preparation. Hydrolyzes plasma proteins involved in blood coagulation in vitro. It slightly shortens prothrombin time and significantly prolongs thrombin time. Has potent alpha-fibrinogenase activity cleaving human fibrinogen alpha chain at '441-Glu-|-Leu-442' and '539-Glu-|-Phe-540' bonds, and to a lesser extent, beta chain at '52-Lys-|-Arg-53' and '48-Pro-|-Leu-49' bonds, but does not cleave gamma chain. Hydrolyzes bovine prothrombin at '200-Ser-|-Gly-201' bond, but does not activate it, however, it cleaves fragment 1 and prethrombin 1 from it. Hydrolyzes bovine factor X heavy chain, but the cleavage does not produce an activated factor Xa heavy chain. No hydrolysis or activation of plasminogen. The ability to degrade some of the ECM, BM and plasma proteins is likely the main contributor to its hemorrhagic activity. Inhibits platelet aggregation induced by collagen in vitro. Its binding to glycosaminoglycans (GAGs) may assist in concentrating it in the proximity of blood vessel walls enabling in vivo degradation of BM protein components. Cytotoxic to cultured HeLa cancer cells in a concentration- and time-dependent manner. In the solubilized BM preparation (Matrigel), it induces morphological changes in the HeLa cells and inhibits their adhesion, however, the viability of the cells is not reduced. This chain is Zinc metalloproteinase-disintegrin-like protein H4 subunit A, found in Vipera ammodytes ammodytes (Western sand viper).